The following is a 166-amino-acid chain: NAD(P)H-quinone oxidoreductase subunit I, chloroplastic (166 aa).

4Fe-4S ferredoxin-type domains lie at 55 to 84 (GRIHFEFDKCIACEVCVRVCPIDLPVVDWQ) and 95 to 124 (VNYSIDFGICIFCGNCVEYCPTNCLSMTEE). [4Fe-4S] cluster-binding residues include Cys-64, Cys-67, Cys-70, Cys-74, Cys-104, Cys-107, Cys-110, and Cys-114.

It belongs to the complex I 23 kDa subunit family. In terms of assembly, NDH is composed of at least 16 different subunits, 5 of which are encoded in the nucleus. The cofactor is [4Fe-4S] cluster.

The protein localises to the plastid. The protein resides in the chloroplast thylakoid membrane. The enzyme catalyses a plastoquinone + NADH + (n+1) H(+)(in) = a plastoquinol + NAD(+) + n H(+)(out). The catalysed reaction is a plastoquinone + NADPH + (n+1) H(+)(in) = a plastoquinol + NADP(+) + n H(+)(out). Its function is as follows. NDH shuttles electrons from NAD(P)H:plastoquinone, via FMN and iron-sulfur (Fe-S) centers, to quinones in the photosynthetic chain and possibly in a chloroplast respiratory chain. The immediate electron acceptor for the enzyme in this species is believed to be plastoquinone. Couples the redox reaction to proton translocation, and thus conserves the redox energy in a proton gradient. The chain is NAD(P)H-quinone oxidoreductase subunit I, chloroplastic from Coreopsis petrophiloides (Tickseed).